A 200-amino-acid chain; its full sequence is Lipopolysaccharide core heptose(II)-phosphate phosphatase (200 aa).

A signal peptide spans 1 to 25; sequence MLAFCRSSLKSKKYFIILLALAAIA.

It belongs to the phosphoglycerate mutase family. Ais subfamily.

The protein localises to the periplasm. The protein operates within bacterial outer membrane biogenesis; lipopolysaccharide metabolism. Functionally, catalyzes the dephosphorylation of heptose(II) of the outer membrane lipopolysaccharide core. This is Lipopolysaccharide core heptose(II)-phosphate phosphatase from Escherichia coli O157:H7.